The sequence spans 62 residues: Phylloseptin-Az7 (62 aa).

Residues 1–19 (LKKSLFLVLFLGLVSLSIC) form the signal peptide. The propeptide occupies 20-40 (EEEKRETEEKENEQEDDKSEE). Phenylalanine 61 carries the phenylalanine amide modification.

The protein belongs to the frog skin active peptide (FSAP) family. Phylloseptin subfamily. Expressed by the skin glands.

The protein localises to the secreted. Its function is as follows. Has antimicrobial activity. This is Phylloseptin-Az7 (psn15) from Pithecopus azureus (Orange-legged monkey tree frog).